A 198-amino-acid chain; its full sequence is Charged multivesicular body protein 1a (198 aa).

Coiled-coil stretches lie at residues 7 to 41 and 176 to 198; these read QLKF…QQKN and GETS…ALRN. A disordered region spans residues 171-198; the sequence is GASALGETSARAQEKEDQLSRRLAALRN. An MIT-interacting motif motif is present at residues 187-197; that stretch reads DQLSRRLAALR.

It belongs to the SNF7 family. As to quaternary structure, probable peripherally associated component of the endosomal sorting required for transport complex III (ESCRT-III).

It is found in the cytoplasm. The protein localises to the endosome membrane. Functionally, probable peripherally associated component of the endosomal sorting required for transport complex III (ESCRT-III) which is involved in multivesicular bodies (MVBs) formation and sorting of endosomal cargo proteins into MVBs. MVBs contain intraluminal vesicles (ILVs) that are generated by invagination and scission from the limiting membrane of the endosome and mostly are delivered to lysosomes enabling degradation of membrane proteins, such as stimulated growth factor receptors, lysosomal enzymes and lipids. This is Charged multivesicular body protein 1a (chmp1a) from Danio rerio (Zebrafish).